A 264-amino-acid polypeptide reads, in one-letter code: 3-methyl-2-oxobutanoate hydroxymethyltransferase (264 aa).

Positions 45 and 84 each coordinate Mg(2+). 3-methyl-2-oxobutanoate is bound by residues 45 to 46 (DS), Asp-84, and Lys-112. Glu-114 lines the Mg(2+) pocket. The active-site Proton acceptor is Glu-181.

Belongs to the PanB family. In terms of assembly, homodecamer; pentamer of dimers. Mg(2+) is required as a cofactor.

The protein localises to the cytoplasm. The catalysed reaction is 3-methyl-2-oxobutanoate + (6R)-5,10-methylene-5,6,7,8-tetrahydrofolate + H2O = 2-dehydropantoate + (6S)-5,6,7,8-tetrahydrofolate. It participates in cofactor biosynthesis; (R)-pantothenate biosynthesis; (R)-pantoate from 3-methyl-2-oxobutanoate: step 1/2. Catalyzes the reversible reaction in which hydroxymethyl group from 5,10-methylenetetrahydrofolate is transferred onto alpha-ketoisovalerate to form ketopantoate. This Vibrio parahaemolyticus serotype O3:K6 (strain RIMD 2210633) protein is 3-methyl-2-oxobutanoate hydroxymethyltransferase.